A 301-amino-acid chain; its full sequence is Fructokinase (301 aa).

Zn(2+)-binding residues include His165, Cys181, His184, and Cys187.

It belongs to the ROK (NagC/XylR) family. Mg(2+) is required as a cofactor.

It carries out the reaction D-fructose + ATP = D-fructose 6-phosphate + ADP + H(+). Inhibition by zinc ions. The protein is Fructokinase (frk) of Zymomonas mobilis subsp. mobilis (strain ATCC 31821 / ZM4 / CP4).